Reading from the N-terminus, the 392-residue chain is Protein FAM53C (392 aa).

Residue M1 is modified to N-acetylmethionine. The tract at residues 76 to 120 (LHLRPPSPGSSPQEQSLSQVLSPEPPDPEKLPVPPAPPSKRHCRS) is disordered. Positions 85-97 (SSPQEQSLSQVLS) are enriched in low complexity. 2 positions are modified to phosphoserine: S122 and S162. Disordered regions lie at residues 141 to 167 (LWTP…PKRV) and 201 to 294 (DSSH…EDPR). Positions 201–215 (DSSHPSAASPQSGSW) are enriched in polar residues. Phosphoserine is present on residues S232, S234, S255, and S273. Over residues 241-256 (ASRFLPSARSSPASSP) the composition is skewed to low complexity. A compositionally biased stretch (basic and acidic residues) spans 278–294 (LDARKAGVKRRHEEDPR). S299 is subject to Phosphoserine.

This sequence belongs to the FAM53 family.

The protein is Protein FAM53C of Bos taurus (Bovine).